The sequence spans 347 residues: tRNA N6-adenosine threonylcarbamoyltransferase (347 aa).

Residues H117 and H121 each contribute to the Fe cation site. Substrate-binding positions include 140–144 (LVSGG), D174, G187, D191, and N281. Fe cation is bound at residue D309.

The protein belongs to the KAE1 / TsaD family. It depends on Fe(2+) as a cofactor.

The protein resides in the cytoplasm. It catalyses the reaction L-threonylcarbamoyladenylate + adenosine(37) in tRNA = N(6)-L-threonylcarbamoyladenosine(37) in tRNA + AMP + H(+). Its function is as follows. Required for the formation of a threonylcarbamoyl group on adenosine at position 37 (t(6)A37) in tRNAs that read codons beginning with adenine. Is involved in the transfer of the threonylcarbamoyl moiety of threonylcarbamoyl-AMP (TC-AMP) to the N6 group of A37, together with TsaE and TsaB. TsaD likely plays a direct catalytic role in this reaction. The protein is tRNA N6-adenosine threonylcarbamoyltransferase of Thermobifida fusca (strain YX).